We begin with the raw amino-acid sequence, 408 residues long: LL-diaminopimelate aminotransferase (408 aa).

Substrate contacts are provided by Tyr-15 and Gly-42. Pyridoxal 5'-phosphate contacts are provided by residues Tyr-72, 108–109, Tyr-132, Asn-187, Tyr-218, and 246–248; these read SK and SFS. Positions 109, 132, and 187 each coordinate substrate. At Lys-249 the chain carries N6-(pyridoxal phosphate)lysine. Residues Arg-257 and Asn-292 each contribute to the pyridoxal 5'-phosphate site. Asn-292 and Arg-388 together coordinate substrate.

This sequence belongs to the class-I pyridoxal-phosphate-dependent aminotransferase family. LL-diaminopimelate aminotransferase subfamily. In terms of assembly, homodimer. Pyridoxal 5'-phosphate is required as a cofactor.

It carries out the reaction (2S,6S)-2,6-diaminopimelate + 2-oxoglutarate = (S)-2,3,4,5-tetrahydrodipicolinate + L-glutamate + H2O + H(+). It functions in the pathway amino-acid biosynthesis; L-lysine biosynthesis via DAP pathway; LL-2,6-diaminopimelate from (S)-tetrahydrodipicolinate (aminotransferase route): step 1/1. Its function is as follows. Involved in the synthesis of meso-diaminopimelate (m-DAP or DL-DAP), required for both lysine and peptidoglycan biosynthesis. Catalyzes the direct conversion of tetrahydrodipicolinate to LL-diaminopimelate. The chain is LL-diaminopimelate aminotransferase from Leptospira biflexa serovar Patoc (strain Patoc 1 / Ames).